The chain runs to 508 residues: ATP synthase subunit alpha, chloroplastic (508 aa).

171–178 (GDRQTGKT) lines the ATP pocket.

The protein belongs to the ATPase alpha/beta chains family. In terms of assembly, F-type ATPases have 2 components, CF(1) - the catalytic core - and CF(0) - the membrane proton channel. CF(1) has five subunits: alpha(3), beta(3), gamma(1), delta(1), epsilon(1). CF(0) has four main subunits: a, b, b' and c.

The protein localises to the plastid. It localises to the chloroplast thylakoid membrane. It carries out the reaction ATP + H2O + 4 H(+)(in) = ADP + phosphate + 5 H(+)(out). Produces ATP from ADP in the presence of a proton gradient across the membrane. The alpha chain is a regulatory subunit. The sequence is that of ATP synthase subunit alpha, chloroplastic from Gnetum parvifolium (Small-leaved jointfir).